A 402-amino-acid polypeptide reads, in one-letter code: Argininosuccinate synthase (402 aa).

Residue 9-17 (AYSGGLDTS) participates in ATP binding. Y87 contacts L-citrulline. ATP is bound at residue G117. L-aspartate contacts are provided by T119, N123, and D124. N123 contributes to the L-citrulline binding site. 5 residues coordinate L-citrulline: R127, S176, S185, E261, and Y273.

The protein belongs to the argininosuccinate synthase family. Type 1 subfamily. In terms of assembly, homotetramer.

Its subcellular location is the cytoplasm. The enzyme catalyses L-citrulline + L-aspartate + ATP = 2-(N(omega)-L-arginino)succinate + AMP + diphosphate + H(+). It functions in the pathway amino-acid biosynthesis; L-arginine biosynthesis; L-arginine from L-ornithine and carbamoyl phosphate: step 2/3. This Chlorobium phaeobacteroides (strain BS1) protein is Argininosuccinate synthase.